We begin with the raw amino-acid sequence, 668 residues long: BTB/POZ domain-containing protein At5g66560 (668 aa).

One can recognise a BTB domain in the interval 21–133 (SDIEIEVDDM…CYGVKMDLSA (113 aa)). Residues 73 to 84 (ETDKKGKGHEIE) show a composition bias toward basic and acidic residues. Positions 73-98 (ETDKKGKGHEIEDDKEEEEVEEQEIE) are disordered. The span at 85–98 (DDKEEEEVEEQEIE) shows a compositional bias: acidic residues. The 277-residue stretch at 254-530 (ELWFEDLTQL…VQVLFFEQLQ (277 aa)) folds into the NPH3 domain. Tyr-471 is modified (phosphotyrosine).

The protein belongs to the NPH3 family.

It participates in protein modification; protein ubiquitination. May act as a substrate-specific adapter of an E3 ubiquitin-protein ligase complex (CUL3-RBX1-BTB) which mediates the ubiquitination and subsequent proteasomal degradation of target proteins. The protein is BTB/POZ domain-containing protein At5g66560 of Arabidopsis thaliana (Mouse-ear cress).